The chain runs to 561 residues: Putative transport protein YbjL (561 aa).

A run of 5 helical transmembrane segments spans residues 8–28, 32–52, 66–86, 94–114, and 158–178; these read LLNGNYILLLFVVLALGLCLG, LGSIQLGNSIGVLVVSLLLGQ, FMLFIFCVGVEAGPNFFSIFF, MLALVMVGSALVIALGLGKLF, and NLSLGYALTYLIGLVSLIVGA. RCK C-terminal domains lie at 200–288 and 292–373; these read RGLD…SFRN and VFDR…RIGF. 6 helical membrane-spanning segments follow: residues 383 to 403, 406 to 426, 451 to 471, 475 to 495, 503 to 523, and 540 to 560; these read LLAFCAFFVIGLMIGMITFQF, FSFGMGNAAGLLFAGIMLGFM, VFMAGVGLSAGSGINNGLGAI, MLIAGLIVSLVPVVICFLFGA, ALLFGAMMGARTCAPAMEIIS, and AIANVLLTLAGTIIVMVCPGL.

The protein belongs to the AAE transporter (TC 2.A.81) family. YbjL subfamily.

It is found in the cell membrane. The sequence is that of Putative transport protein YbjL from Shigella dysenteriae serotype 1 (strain Sd197).